The chain runs to 615 residues: 1-deoxy-D-xylulose-5-phosphate synthase (615 aa).

Thiamine diphosphate-binding positions include His-76 and 117 to 119 (GHS). Asp-148 is a binding site for Mg(2+). Residues 149-150 (GA), Asn-177, Tyr-284, and Glu-365 contribute to the thiamine diphosphate site. Residue Asn-177 coordinates Mg(2+).

It belongs to the transketolase family. DXPS subfamily. As to quaternary structure, homodimer. Mg(2+) is required as a cofactor. Requires thiamine diphosphate as cofactor.

The catalysed reaction is D-glyceraldehyde 3-phosphate + pyruvate + H(+) = 1-deoxy-D-xylulose 5-phosphate + CO2. It functions in the pathway metabolic intermediate biosynthesis; 1-deoxy-D-xylulose 5-phosphate biosynthesis; 1-deoxy-D-xylulose 5-phosphate from D-glyceraldehyde 3-phosphate and pyruvate: step 1/1. Functionally, catalyzes the acyloin condensation reaction between C atoms 2 and 3 of pyruvate and glyceraldehyde 3-phosphate to yield 1-deoxy-D-xylulose-5-phosphate (DXP). This Francisella tularensis subsp. mediasiatica (strain FSC147) protein is 1-deoxy-D-xylulose-5-phosphate synthase.